Consider the following 262-residue polypeptide: tRNA pseudouridine synthase B (262 aa).

The active-site Nucleophile is the Asp-77.

This sequence belongs to the pseudouridine synthase TruB family. Type 1 subfamily.

It carries out the reaction uridine(55) in tRNA = pseudouridine(55) in tRNA. In terms of biological role, responsible for synthesis of pseudouridine from uracil-55 in the psi GC loop of transfer RNAs. The chain is tRNA pseudouridine synthase B from Protochlamydia amoebophila (strain UWE25).